The primary structure comprises 55 residues: Large ribosomal subunit protein bL33 (55 aa).

Belongs to the bacterial ribosomal protein bL33 family.

This is Large ribosomal subunit protein bL33 from Dehalococcoides mccartyi (strain ATCC BAA-2266 / KCTC 15142 / 195) (Dehalococcoides ethenogenes (strain 195)).